The chain runs to 291 residues: ATP synthase subunit a (291 aa).

6 helical membrane-spanning segments follow: residues 50–70 (LDSM…FWIV), 108–128 (IAPL…MDLI), 161–181 (DPNI…FYSI), 203–223 (PVAK…TFLA), 241–261 (LIFI…SVPW), and 262–282 (AIFH…LTIV).

The protein belongs to the ATPase A chain family. As to quaternary structure, F-type ATPases have 2 components, CF(1) - the catalytic core - and CF(0) - the membrane proton channel. CF(1) has five subunits: alpha(3), beta(3), gamma(1), delta(1), epsilon(1). CF(0) has three main subunits: a(1), b(2) and c(9-12). The alpha and beta chains form an alternating ring which encloses part of the gamma chain. CF(1) is attached to CF(0) by a central stalk formed by the gamma and epsilon chains, while a peripheral stalk is formed by the delta and b chains.

It localises to the cell inner membrane. Its function is as follows. Key component of the proton channel; it plays a direct role in the translocation of protons across the membrane. In Acinetobacter baumannii (strain SDF), this protein is ATP synthase subunit a.